The sequence spans 227 residues: Phosphoribosylaminoimidazole-succinocarboxamide synthase (227 aa).

The protein belongs to the SAICAR synthetase family.

It catalyses the reaction 5-amino-1-(5-phospho-D-ribosyl)imidazole-4-carboxylate + L-aspartate + ATP = (2S)-2-[5-amino-1-(5-phospho-beta-D-ribosyl)imidazole-4-carboxamido]succinate + ADP + phosphate + 2 H(+). The protein operates within purine metabolism; IMP biosynthesis via de novo pathway; 5-amino-1-(5-phospho-D-ribosyl)imidazole-4-carboxamide from 5-amino-1-(5-phospho-D-ribosyl)imidazole-4-carboxylate: step 1/2. The chain is Phosphoribosylaminoimidazole-succinocarboxamide synthase from Clostridium tetani (strain Massachusetts / E88).